We begin with the raw amino-acid sequence, 504 residues long: Anaerobic nitric oxide reductase transcription regulator NorR (504 aa).

At Asp57 the chain carries 4-aspartylphosphate. One can recognise a Sigma-54 factor interaction domain in the interval 187–416 (MIGLSPGMTQ…LEHAIHRAVV (230 aa)). ATP is bound by residues 215-222 (GETGTGKE) and 278-287 (ADNGTLFLDE). A DNA-binding region (H-T-H motif) is located at residues 479 to 498 (WAACARMLETDVANLHRLAK).

The protein operates within nitrogen metabolism; nitric oxide reduction. Its function is as follows. Required for the expression of anaerobic nitric oxide (NO) reductase, acts as a transcriptional activator for at least the norVW operon. Activation also requires sigma-54. The sequence is that of Anaerobic nitric oxide reductase transcription regulator NorR from Shigella flexneri serotype 5b (strain 8401).